We begin with the raw amino-acid sequence, 129 residues long: Glycine cleavage system H protein (129 aa).

The 83-residue stretch at 24–106 (IATIGITEFA…YGEGWFLKVR (83 aa)) folds into the Lipoyl-binding domain. N6-lipoyllysine is present on Lys-65.

The protein belongs to the GcvH family. The glycine cleavage system is composed of four proteins: P, T, L and H. (R)-lipoate is required as a cofactor.

In terms of biological role, the glycine cleavage system catalyzes the degradation of glycine. The H protein shuttles the methylamine group of glycine from the P protein to the T protein. In Nostoc punctiforme (strain ATCC 29133 / PCC 73102), this protein is Glycine cleavage system H protein.